The primary structure comprises 719 residues: Probable 1-deoxy-D-xylulose-5-phosphate synthase, chloroplastic (719 aa).

The transit peptide at 1-57 directs the protein to the chloroplast; it reads MALCAYAFPGILNRTVAVASDASKPTPLFSEWIHGTDLQFQFHQKLTQVKKRSRTVQ. Thiamine diphosphate contacts are provided by residues His145 and 186-188; that span reads GHS. Asp217 provides a ligand contact to Mg(2+). Residues 218 to 219, Asn246, Tyr367, and Glu449 contribute to the thiamine diphosphate site; that span reads GA. Residue Asn246 coordinates Mg(2+).

Belongs to the transketolase family. DXPS subfamily. In terms of assembly, homodimer. The cofactor is Mg(2+). Requires thiamine diphosphate as cofactor.

It is found in the plastid. Its subcellular location is the chloroplast. The catalysed reaction is D-glyceraldehyde 3-phosphate + pyruvate + H(+) = 1-deoxy-D-xylulose 5-phosphate + CO2. The protein operates within metabolic intermediate biosynthesis; 1-deoxy-D-xylulose 5-phosphate biosynthesis; 1-deoxy-D-xylulose 5-phosphate from D-glyceraldehyde 3-phosphate and pyruvate: step 1/1. Catalyzes the acyloin condensation reaction between C atoms 2 and 3 of pyruvate and glyceraldehyde 3-phosphate to yield 1-deoxy-D-xylulose-5-phosphate (DXP). In Capsicum annuum (Capsicum pepper), this protein is Probable 1-deoxy-D-xylulose-5-phosphate synthase, chloroplastic (TKT2).